Here is a 379-residue protein sequence, read N- to C-terminus: Probable leucine aminopeptidase ARB_01443 (379 aa).

An N-terminal signal peptide occupies residues 1-18 (MKIATLAVVSAFAATAIA). Zn(2+) contacts are provided by H182 and D201. N-linked (GlcNAc...) asparagine glycosylation is found at N202 and N226. Positions 240 and 267 each coordinate Zn(2+). C312 and C316 are joined by a disulfide. H345 lines the Zn(2+) pocket.

It belongs to the peptidase M28 family. M28E subfamily. Monomer. The cofactor is Zn(2+).

It localises to the secreted. In terms of biological role, probable extracellular aminopeptidase which contributes to pathogenicity. This chain is Probable leucine aminopeptidase ARB_01443, found in Arthroderma benhamiae (strain ATCC MYA-4681 / CBS 112371) (Trichophyton mentagrophytes).